Here is a 262-residue protein sequence, read N- to C-terminus: Phosphatidylglycerol--prolipoprotein diacylglyceryl transferase (262 aa).

Transmembrane regions (helical) follow at residues 17–37 (LKVH…WILA), 57–77 (LVFY…ALFY), and 92–112 (IWEG…AMYA). Position 140 (arginine 140) interacts with a 1,2-diacyl-sn-glycero-3-phospho-(1'-sn-glycerol). 2 helical membrane passes run 200–220 (MAVS…VEFV) and 234–254 (WLTM…VLLA).

It belongs to the Lgt family.

The protein localises to the cell inner membrane. It carries out the reaction L-cysteinyl-[prolipoprotein] + a 1,2-diacyl-sn-glycero-3-phospho-(1'-sn-glycerol) = an S-1,2-diacyl-sn-glyceryl-L-cysteinyl-[prolipoprotein] + sn-glycerol 1-phosphate + H(+). Its pathway is protein modification; lipoprotein biosynthesis (diacylglyceryl transfer). Functionally, catalyzes the transfer of the diacylglyceryl group from phosphatidylglycerol to the sulfhydryl group of the N-terminal cysteine of a prolipoprotein, the first step in the formation of mature lipoproteins. This Methylococcus capsulatus (strain ATCC 33009 / NCIMB 11132 / Bath) protein is Phosphatidylglycerol--prolipoprotein diacylglyceryl transferase.